We begin with the raw amino-acid sequence, 389 residues long: Phospho-N-acetylmuramoyl-pentapeptide-transferase (389 aa).

10 consecutive transmembrane segments (helical) span residues 25 to 45 (RAVM…PWVI), 74 to 94 (MGGV…CDWG), 97 to 117 (FIWV…VDDY), 134 to 154 (FFWQ…SVSE), 190 to 210 (VSYP…IVGS), 222 to 242 (GLVI…AYVM), 259 to 279 (AGEL…FLWF), 286 to 306 (VFMG…VAVI), 311 to 331 (IVLF…MLQV), and 366 to 386 (QVTV…LSTL).

This sequence belongs to the glycosyltransferase 4 family. MraY subfamily. Requires Mg(2+) as cofactor.

The protein localises to the cell inner membrane. It catalyses the reaction UDP-N-acetyl-alpha-D-muramoyl-L-alanyl-gamma-D-glutamyl-meso-2,6-diaminopimeloyl-D-alanyl-D-alanine + di-trans,octa-cis-undecaprenyl phosphate = di-trans,octa-cis-undecaprenyl diphospho-N-acetyl-alpha-D-muramoyl-L-alanyl-D-glutamyl-meso-2,6-diaminopimeloyl-D-alanyl-D-alanine + UMP. Its pathway is cell wall biogenesis; peptidoglycan biosynthesis. Functionally, catalyzes the initial step of the lipid cycle reactions in the biosynthesis of the cell wall peptidoglycan: transfers peptidoglycan precursor phospho-MurNAc-pentapeptide from UDP-MurNAc-pentapeptide onto the lipid carrier undecaprenyl phosphate, yielding undecaprenyl-pyrophosphoryl-MurNAc-pentapeptide, known as lipid I. The polypeptide is Phospho-N-acetylmuramoyl-pentapeptide-transferase (Cupriavidus pinatubonensis (strain JMP 134 / LMG 1197) (Cupriavidus necator (strain JMP 134))).